A 378-amino-acid polypeptide reads, in one-letter code: MTKPAILALADGSIFRGEAIGADGQTVGEVVFNTAMTGYQEILTDPSYAQQIVTLTYPHIGNTGTTPEDAESSRVWSAGLVIRDLPLLASNWRNTQSLPEYLKANNVVAIAGIDTRRLTRILREKGAQNGCILAGDNISEEAAIAAARGFPGLKGMDLAKVVSTKERYEWRSSVWELKTDSHPTIDAADLPYHVVAFDYGVKLNILRMLVARGCRVTVVPAQTPASEVLALNPDGVFLSNGPGDPEPCDYAIQAIKEILETEIPVFGICLGHQLLALASGAKTVKMGHGHHGANHPVQDLDTGVVMITSQNHGFAVDEATLPGNVRAIHKSLFDGTLQGIERTDKSAFSFQGHPEASPGPTDVAPLFDRFTDAMAKRR.

The CPSase stretch occupies residues 1 to 189; that stretch reads MTKPAILALA…DSHPTIDAAD (189 aa). L-glutamine contacts are provided by Ser-47, Gly-241, and Gly-243. Positions 193–378 constitute a Glutamine amidotransferase type-1 domain; that stretch reads HVVAFDYGVK…RFTDAMAKRR (186 aa). Catalysis depends on Cys-269, which acts as the Nucleophile. Positions 270, 273, 311, 313, and 314 each coordinate L-glutamine. Residues His-353 and Glu-355 contribute to the active site.

Belongs to the CarA family. Composed of two chains; the small (or glutamine) chain promotes the hydrolysis of glutamine to ammonia, which is used by the large (or ammonia) chain to synthesize carbamoyl phosphate. Tetramer of heterodimers (alpha,beta)4.

The enzyme catalyses hydrogencarbonate + L-glutamine + 2 ATP + H2O = carbamoyl phosphate + L-glutamate + 2 ADP + phosphate + 2 H(+). The catalysed reaction is L-glutamine + H2O = L-glutamate + NH4(+). The protein operates within amino-acid biosynthesis; L-arginine biosynthesis; carbamoyl phosphate from bicarbonate: step 1/1. Its pathway is pyrimidine metabolism; UMP biosynthesis via de novo pathway; (S)-dihydroorotate from bicarbonate: step 1/3. Functionally, small subunit of the glutamine-dependent carbamoyl phosphate synthetase (CPSase). CPSase catalyzes the formation of carbamoyl phosphate from the ammonia moiety of glutamine, carbonate, and phosphate donated by ATP, constituting the first step of 2 biosynthetic pathways, one leading to arginine and/or urea and the other to pyrimidine nucleotides. The small subunit (glutamine amidotransferase) binds and cleaves glutamine to supply the large subunit with the substrate ammonia. The protein is Carbamoyl phosphate synthase small chain of Pseudomonas putida (strain ATCC 47054 / DSM 6125 / CFBP 8728 / NCIMB 11950 / KT2440).